A 498-amino-acid polypeptide reads, in one-letter code: Glycerol kinase (498 aa).

Residue T13 coordinates ADP. The ATP site is built by T13, T14, and S15. T13 provides a ligand contact to sn-glycerol 3-phosphate. Residue R17 participates in ADP binding. Sn-glycerol 3-phosphate-binding residues include R83, E84, Y135, and D244. R83, E84, Y135, D244, and Q245 together coordinate glycerol. Positions 266 and 309 each coordinate ADP. T266, G309, Q313, and G410 together coordinate ATP. Residues G410 and N414 each contribute to the ADP site.

Belongs to the FGGY kinase family. Homotetramer and homodimer (in equilibrium).

The catalysed reaction is glycerol + ATP = sn-glycerol 3-phosphate + ADP + H(+). It functions in the pathway polyol metabolism; glycerol degradation via glycerol kinase pathway; sn-glycerol 3-phosphate from glycerol: step 1/1. With respect to regulation, activated by phosphorylation and inhibited by fructose 1,6-bisphosphate (FBP). Key enzyme in the regulation of glycerol uptake and metabolism. Catalyzes the phosphorylation of glycerol to yield sn-glycerol 3-phosphate. This chain is Glycerol kinase, found in Symbiobacterium thermophilum (strain DSM 24528 / JCM 14929 / IAM 14863 / T).